Reading from the N-terminus, the 466-residue chain is Probable sensor protein PcoS (466 aa).

Topologically, residues 1–10 (MRFKISLTTR) are cytoplasmic. Residues 11–31 (LSLIFSAVMLTVWWLSSFILI) form a helical membrane-spanning segment. Residues 32 to 171 (STLNDYFDNQ…HTLLMDKLST (140 aa)) lie on the Periplasmic side of the membrane. A helical transmembrane segment spans residues 172 to 192 (WLFWFNIGLVFISVFLGWLTT). One can recognise an HAMP domain in the interval 193–246 (RIGLKPLREMTSLASSMTVHSLDQRLNPDLAPPEISETMQEFNNMFDRLEGAFR). Over 193–466 (RIGLKPLREM…IVFKVRLLMD (274 aa)) the chain is Cytoplasmic. One can recognise a Histidine kinase domain in the interval 254–466 (DIAHELRTPV…IVFKVRLLMD (213 aa)). H257 carries the phosphohistidine; by autocatalysis modification.

It localises to the cell inner membrane. It carries out the reaction ATP + protein L-histidine = ADP + protein N-phospho-L-histidine.. In terms of biological role, probable member of a two-component regulatory system PcoS/PcoR. May activate PcoR by phosphorylation. The sequence is that of Probable sensor protein PcoS (pcoS) from Escherichia coli.